A 322-amino-acid chain; its full sequence is CXXC-type zinc finger protein 5 (322 aa).

Positions 1–10 (MSSLGGGSQD) are enriched in gly residues. Residues 1–100 (MSSLGGGSQD…SGGGSMMGGE (100 aa)) form a disordered region. Low complexity-rich tracts occupy residues 11 to 20 (AGGSSSSSTN) and 28 to 52 (SGPKAGAADKSAVVAAATPASVADD). At T53 the chain carries Phosphothreonine. Gly residues predominate over residues 87 to 97 (SSGGSGGGSMM). The segment at 256 to 297 (GKKKRKRCGMCAPCRRRINCEQCSSCRNRKTGHQICKFRKCE) adopts a CXXC-type zinc-finger fold. The short motif at 257–262 (KKKRKR) is the Nuclear localization signal element. Zn(2+) is bound by residues C263, C266, C269, C275, C278, C281, C291, and C296.

Interacts with DVL1. Interacts with RBPJ.

It localises to the nucleus. The protein resides in the cytoplasm. May indirectly participate in activation of the NF-kappa-B and MAPK pathways. Acts as a mediator of BMP4-mediated modulation of canonical Wnt signaling activity in neural stem cells. Required for DNA damage-induced ATM phosphorylation, p53 activation and cell cycle arrest. Involved in myelopoiesis. Binds to the oxygen responsive element of COX4I2 and represses its transcription under hypoxia conditions (4% oxygen), as well as normoxia conditions (20% oxygen). May repress COX4I2 transactivation induced by CHCHD2 and RBPJ. Binds preferentially to DNA containing cytidine-phosphate-guanosine (CpG) dinucleotides over CpH (H=A, T, and C), hemimethylated-CpG and hemimethylated-hydroxymethyl-CpG. The protein is CXXC-type zinc finger protein 5 (CXXC5) of Pongo abelii (Sumatran orangutan).